A 65-amino-acid chain; its full sequence is Small ribosomal subunit protein bS21A (65 aa).

The protein belongs to the bacterial ribosomal protein bS21 family.

This chain is Small ribosomal subunit protein bS21A, found in Francisella tularensis subsp. tularensis (strain FSC 198).